A 238-amino-acid polypeptide reads, in one-letter code: uncharacterized protein (238 aa).

This sequence to M.thermoautotrophicum MTH564.

This is an uncharacterized protein from Methanocaldococcus jannaschii (strain ATCC 43067 / DSM 2661 / JAL-1 / JCM 10045 / NBRC 100440) (Methanococcus jannaschii).